The sequence spans 396 residues: S-adenosylmethionine synthase 3 (396 aa).

Glu-12 lines the Mg(2+) pocket. His-18 is a binding site for ATP. K(+) is bound at residue Glu-46. L-methionine contacts are provided by Glu-59 and Gln-102. ATP is bound by residues 170-172 (DGK), 238-241 (SGRF), Asp-249, 255-256 (RK), Ala-272, Lys-276, and Lys-280. Asp-249 contacts L-methionine. Lys-280 contributes to the L-methionine binding site.

This sequence belongs to the AdoMet synthase family. As to quaternary structure, homotetramer. Requires Mn(2+) as cofactor. It depends on Mg(2+) as a cofactor. The cofactor is Co(2+). K(+) serves as cofactor.

It localises to the cytoplasm. The catalysed reaction is L-methionine + ATP + H2O = S-adenosyl-L-methionine + phosphate + diphosphate. Its pathway is amino-acid biosynthesis; S-adenosyl-L-methionine biosynthesis; S-adenosyl-L-methionine from L-methionine: step 1/1. Catalyzes the formation of S-adenosylmethionine from methionine and ATP. The reaction comprises two steps that are both catalyzed by the same enzyme: formation of S-adenosylmethionine (AdoMet) and triphosphate, and subsequent hydrolysis of the triphosphate. This Oryza sativa subsp. japonica (Rice) protein is S-adenosylmethionine synthase 3 (METK3).